We begin with the raw amino-acid sequence, 260 residues long: Cytochrome c oxidase subunit 3 (260 aa).

7 helical membrane-spanning segments follow: residues 14 to 34 (PWPL…ILWF), 41 to 61 (LLLA…RDVI), 81 to 101 (GMIL…WAFF), 126 to 146 (FLVP…VTWA), 158 to 178 (AIQG…LQAW), 196 to 216 (FFVA…FLFI), and 238 to 258 (AWYW…ICWW).

Belongs to the cytochrome c oxidase subunit 3 family. In terms of assembly, component of the cytochrome c oxidase (complex IV, CIV), a multisubunit enzyme composed of a catalytic core of 3 subunits and several supernumerary subunits. The complex exists as a monomer or a dimer and forms supercomplexes (SCs) in the inner mitochondrial membrane with ubiquinol-cytochrome c oxidoreductase (cytochrome b-c1 complex, complex III, CIII).

The protein resides in the mitochondrion inner membrane. The enzyme catalyses 4 Fe(II)-[cytochrome c] + O2 + 8 H(+)(in) = 4 Fe(III)-[cytochrome c] + 2 H2O + 4 H(+)(out). In terms of biological role, component of the cytochrome c oxidase, the last enzyme in the mitochondrial electron transport chain which drives oxidative phosphorylation. The respiratory chain contains 3 multisubunit complexes succinate dehydrogenase (complex II, CII), ubiquinol-cytochrome c oxidoreductase (cytochrome b-c1 complex, complex III, CIII) and cytochrome c oxidase (complex IV, CIV), that cooperate to transfer electrons derived from NADH and succinate to molecular oxygen, creating an electrochemical gradient over the inner membrane that drives transmembrane transport and the ATP synthase. Cytochrome c oxidase is the component of the respiratory chain that catalyzes the reduction of oxygen to water. Electrons originating from reduced cytochrome c in the intermembrane space (IMS) are transferred via the dinuclear copper A center (CU(A)) of subunit 2 and heme A of subunit 1 to the active site in subunit 1, a binuclear center (BNC) formed by heme A3 and copper B (CU(B)). The BNC reduces molecular oxygen to 2 water molecules using 4 electrons from cytochrome c in the IMS and 4 protons from the mitochondrial matrix. This chain is Cytochrome c oxidase subunit 3 (COIII), found in Patiria pectinifera (Starfish).